The chain runs to 85 residues: Large ribosomal subunit protein bL27 (85 aa).

The tract at residues Met-1–Leu-21 is disordered.

This sequence belongs to the bacterial ribosomal protein bL27 family.

This is Large ribosomal subunit protein bL27 from Porphyromonas gingivalis (strain ATCC 33277 / DSM 20709 / CIP 103683 / JCM 12257 / NCTC 11834 / 2561).